We begin with the raw amino-acid sequence, 204 residues long: Large ribosomal subunit protein uL22c (204 aa).

This sequence belongs to the universal ribosomal protein uL22 family. In terms of assembly, part of the 50S ribosomal subunit.

Its subcellular location is the plastid. The protein localises to the chloroplast. This protein binds specifically to 23S rRNA. Functionally, the globular domain of the protein is located near the polypeptide exit tunnel on the outside of the subunit, while an extended beta-hairpin is found that lines the wall of the exit tunnel in the center of the 70S ribosome. The sequence is that of Large ribosomal subunit protein uL22c (rpl22) from Pisum sativum (Garden pea).